The following is a 296-amino-acid chain: Protoheme IX farnesyltransferase (296 aa).

Residues 1-9 (MMFKQYLQV) lie on the Cytoplasmic side of the membrane. Residues 10–28 (TKPGIIFGNLISVIGGFLL) traverse the membrane as a helical segment. Over 29 to 37 (ASKGSIDYP) the chain is Periplasmic. Residues 38–56 (LFIYTLVGVSLVVASGCVF) form a helical membrane-spanning segment. Topologically, residues 57 to 78 (NNYIDRDIDRKMERTKNRVLVK) are cytoplasmic. The chain crosses the membrane as a helical span at residues 79-97 (GLISPAVSLVYATLLGIAG). The Periplasmic portion of the chain corresponds to 98–107 (FMLLWFGANP). Residues 108–126 (LACWLGVMGFVVYVGVYSL) form a helical membrane-spanning segment. The Cytoplasmic segment spans residues 127–197 (YMKRHSVYGT…YQAANIPVLP (71 aa)). A helical transmembrane segment spans residues 198 to 216 (VVKGISVAKNHITLYIIAF). At 217–228 (AVATLMLSLGGY) the chain is on the periplasmic side. A helical transmembrane segment spans residues 229-247 (AGYKYLVVAAAVSVWWLGM). The Cytoplasmic segment spans residues 248-268 (ALRGYKVADDRIWARKLFGFS). Residues 269–287 (IIAITALSVMMSVDFMVPD) form a helical membrane-spanning segment. Over 288-296 (SHTLLAAVW) the chain is Periplasmic.

It belongs to the UbiA prenyltransferase family. Protoheme IX farnesyltransferase subfamily.

The protein resides in the cell inner membrane. The catalysed reaction is heme b + (2E,6E)-farnesyl diphosphate + H2O = Fe(II)-heme o + diphosphate. Its pathway is porphyrin-containing compound metabolism; heme O biosynthesis; heme O from protoheme: step 1/1. Functionally, converts heme B (protoheme IX) to heme O by substitution of the vinyl group on carbon 2 of heme B porphyrin ring with a hydroxyethyl farnesyl side group. This is Protoheme IX farnesyltransferase from Shigella flexneri.